A 527-amino-acid polypeptide reads, in one-letter code: Probable malate:quinone oxidoreductase 2 (527 aa).

This sequence belongs to the MQO family. FAD serves as cofactor.

The enzyme catalyses (S)-malate + a quinone = a quinol + oxaloacetate. The protein operates within carbohydrate metabolism; tricarboxylic acid cycle; oxaloacetate from (S)-malate (quinone route): step 1/1. This chain is Probable malate:quinone oxidoreductase 2, found in Pseudomonas putida (strain ATCC 47054 / DSM 6125 / CFBP 8728 / NCIMB 11950 / KT2440).